We begin with the raw amino-acid sequence, 515 residues long: 2-isopropylmalate synthase (515 aa).

Positions 5–267 constitute a Pyruvate carboxyltransferase domain; sequence VIIFDTTLRD…DTRINTQEIH (263 aa). Mn(2+)-binding residues include D14, H202, H204, and N238. Positions 392 to 515 are regulatory domain; it reads VLDKLSAHST…VADIKNHKHH (124 aa).

It belongs to the alpha-IPM synthase/homocitrate synthase family. LeuA type 1 subfamily. In terms of assembly, homodimer. The cofactor is Mn(2+).

It localises to the cytoplasm. It carries out the reaction 3-methyl-2-oxobutanoate + acetyl-CoA + H2O = (2S)-2-isopropylmalate + CoA + H(+). It functions in the pathway amino-acid biosynthesis; L-leucine biosynthesis; L-leucine from 3-methyl-2-oxobutanoate: step 1/4. Its function is as follows. Catalyzes the condensation of the acetyl group of acetyl-CoA with 3-methyl-2-oxobutanoate (2-ketoisovalerate) to form 3-carboxy-3-hydroxy-4-methylpentanoate (2-isopropylmalate). The polypeptide is 2-isopropylmalate synthase (Haemophilus influenzae (strain PittEE)).